Here is a 241-residue protein sequence, read N- to C-terminus: NAD-dependent protein deacetylase 2 (241 aa).

The Deacetylase sirtuin-type domain maps to 1 to 241; sequence MTGKPLVAIL…ALPALLRGLG (241 aa). Residues alanine 13, threonine 17, arginine 25, glutamine 92, valine 94, aspartate 95, and histidine 112 each coordinate NAD(+). Residues valine 94 and aspartate 95 each coordinate nicotinamide. The active-site Proton acceptor is histidine 112. Zn(2+) contacts are provided by cysteine 120, cysteine 123, cysteine 145, and cysteine 148. Threonine 186, serine 187, asparagine 211, and isoleucine 229 together coordinate NAD(+).

The protein belongs to the sirtuin family. Class U subfamily. The cofactor is Zn(2+).

It is found in the cytoplasm. The enzyme catalyses N(6)-acetyl-L-lysyl-[protein] + NAD(+) + H2O = 2''-O-acetyl-ADP-D-ribose + nicotinamide + L-lysyl-[protein]. In terms of biological role, NAD-dependent protein deacetylase which modulates the activities of several enzymes which are inactive in their acetylated form. The protein is NAD-dependent protein deacetylase 2 of Streptomyces coelicolor (strain ATCC BAA-471 / A3(2) / M145).